The chain runs to 269 residues: 1,6-dihydroxycyclohexa-2,4-diene-1-carboxylate dehydrogenase (269 aa).

Residue 11–35 (VITGAAQGIGRRVAERMAAEGGRLL) participates in NAD(+) binding. A substrate-binding site is contributed by Ser-142. Tyr-153 acts as the Proton acceptor in catalysis.

Belongs to the short-chain dehydrogenases/reductases (SDR) family. Homodimer.

The enzyme catalyses (1R,6S)-1,6-dihydroxycyclohexa-2,4-diene-1-carboxylate + NAD(+) = catechol + CO2 + NADH. The protein operates within aromatic compound metabolism; benzoate degradation via hydroxylation; catechol from benzoate: step 2/2. Its function is as follows. Degradation of 2-hydro-1,2-dihydroxy benzoate (DHB) to catechol. This Pseudomonas putida (Arthrobacter siderocapsulatus) protein is 1,6-dihydroxycyclohexa-2,4-diene-1-carboxylate dehydrogenase (xylL).